A 396-amino-acid chain; its full sequence is Ribosomal RNA large subunit methyltransferase I (396 aa).

A PUA domain is found at 2 to 81; it reads SVRLVLAKGR…ESIDIAFFSR (80 aa).

The protein belongs to the methyltransferase superfamily. RlmI family.

It is found in the cytoplasm. It catalyses the reaction cytidine(1962) in 23S rRNA + S-adenosyl-L-methionine = 5-methylcytidine(1962) in 23S rRNA + S-adenosyl-L-homocysteine + H(+). In terms of biological role, specifically methylates the cytosine at position 1962 (m5C1962) of 23S rRNA. This chain is Ribosomal RNA large subunit methyltransferase I, found in Escherichia coli O157:H7.